A 164-amino-acid polypeptide reads, in one-letter code: B-phycoerythrin alpha chain (164 aa).

(2R,3E)-phycoerythrobilin is bound by residues C82 and C139.

The protein belongs to the phycobiliprotein family. Heteromer of 6 alpha, 6 beta and one gamma chain. Contains two covalently linked bilin chromophores.

It localises to the plastid. It is found in the chloroplast thylakoid membrane. Light-harvesting photosynthetic bile pigment-protein from the phycobiliprotein complex. The sequence is that of B-phycoerythrin alpha chain (cpeA) from Rhodella violacea (Red alga).